The following is a 103-amino-acid chain: MYRFACRTLMLAACILATGVAGLGVGAQSAAQTAPVPDYYWCPGQPFDPAWGPNWDPYTCHDDFHRDSDGPDHSRDYPGPILEGPVLDDPGAAPPPPAAGGGA.

The signal sequence occupies residues 1–30; sequence MYRFACRTLMLAACILATGVAGLGVGAQSA. Basic and acidic residues predominate over residues 61 to 76; sequence HDDFHRDSDGPDHSRD. Residues 61–103 form a disordered region; the sequence is HDDFHRDSDGPDHSRDYPGPILEGPVLDDPGAAPPPPAAGGGA. Residues 92–103 show a composition bias toward pro residues; that stretch reads AAPPPPAAGGGA.

It belongs to the mycobacterial pilin family. In terms of assembly, forms a homomer composed of subunits assembled in a large structure.

It is found in the fimbrium. Its function is as follows. Structural subunit of pili, which are thin, flexible, coiled-coil, aggregative fibers. Mediates adhesion to the extracellular matrix, an event that would facilitate direct interaction with the host epithelium during infection in the lung or other tissues. This chain is Pilin (mtp), found in Mycobacterium bovis (strain ATCC BAA-935 / AF2122/97).